A 372-amino-acid chain; its full sequence is Recombinase Flp protein (372 aa).

The Tyr recombinase Flp-type domain occupies 85–367 (GGHNAVAEEI…EYVHSYAMGK (283 aa)). Residue Tyr-292 is the O-(3'-phospho-DNA)-tyrosine intermediate of the active site.

Belongs to the 'phage' integrase family.

Catalyzes the recombination between the large inverted repetitions of the plasmid. The polypeptide is Recombinase Flp protein (Lachancea fermentati (Zygosaccharomyces fermentati)).